A 250-amino-acid polypeptide reads, in one-letter code: Golgi SNAP receptor complex member 1 (250 aa).

An N-acetylalanine modification is found at A2. Over 2-229 (AAGTSSYWED…QRINLRKRRD (228 aa)) the chain is Cytoplasmic. Residues 9 to 30 (WEDLRKQARQLENELDLKLVSF) are a coiled coil. The tract at residues 38 to 59 (SHSSTRDGRRDRYSSDTTPLLN) is disordered. The segment covering 41–51 (STRDGRRDRYS) has biased composition (basic and acidic residues). Positions 68-95 (ETMAIEIEQLLARLTGVNDKMAEYTNSA) form a coiled coil. S141 is subject to Phosphoserine. A helical; Anchor for type IV membrane protein transmembrane segment spans residues 230–250 (SLILGGVIGICTILLLLYAFH).

This sequence belongs to the GOSR1 family. In terms of assembly, component of several multiprotein Golgi SNARE complexes. Identified in a SNARE complex with BET1, STX5 and YKT6, in a SNARE complex with BET1L, STX5 and YKT6, in a SNARE complex with STX5, GOSR2, SEC22B and BET1, and in complex with STX5 and COG3. Interacts with GABARAPL2.

Its subcellular location is the golgi apparatus membrane. In terms of biological role, involved in transport from the ER to the Golgi apparatus as well as in intra-Golgi transport. It belongs to a super-family of proteins called t-SNAREs or soluble NSF (N-ethylmaleimide-sensitive factor) attachment protein receptor. May play a protective role against hydrogen peroxide induced cytotoxicity under glutathione depleted conditions in neuronal cells by regulating the intracellular ROS levels via inhibition of p38 MAPK (MAPK11, MAPK12, MAPK13 and MAPK14). Participates in docking and fusion stage of ER to cis-Golgi transport. Plays an important physiological role in VLDL-transport vesicle-Golgi fusion and thus in VLDL delivery to the hepatic cis-Golgi. This chain is Golgi SNAP receptor complex member 1 (GOSR1), found in Homo sapiens (Human).